Consider the following 420-residue polypeptide: Ammonia monooxygenase beta subunit (420 aa).

An N-terminal signal peptide occupies residues 1–25; the sequence is MGIKNLYKRGVMGLYGVAYAVAALA. Cu cation is bound by residues H38, H142, and H144. 2 consecutive transmembrane segments (helical) span residues 193-213 and 240-260; these read GIFW…VFTA and ITWV…RYTE.

The soluble ammonia monooxygenase is a nonamer composed of three alpha subunits (AmoA), three beta subunits (AmoB) and three gamma subunits (Cytochrome c1 PetC). Cu(2+) is required as a cofactor.

It localises to the cell membrane. The protein localises to the cytoplasm. It carries out the reaction AH2 + NH4(+) + O2 = hydroxylamine + A + H2O + H(+). In vitro, inhibited by acetylene. Part of the ammonia monooxygenase complex, which catalyzes the oxidation of ammonia to hydroxylamine, the first reaction in the process of ammonia oxidation to nitrite. In Nitrosomonas europaea (strain ATCC 19718 / CIP 103999 / KCTC 2705 / NBRC 14298), this protein is Ammonia monooxygenase beta subunit.